We begin with the raw amino-acid sequence, 205 residues long: Holliday junction branch migration complex subunit RuvA (205 aa).

A domain I region spans residues 1–64; it reads MIGRLRGVLV…EDAQLLYGFI (64 aa). Residues 65–143 are domain II; it reads TKQERALFRL…SLMEASAGSE (79 aa). The flexible linker stretch occupies residues 144–156; it reads REFVLQSNYSPTP. Residues 157-205 are domain III; that stretch reads TVNSAEEDAISALISLGYKPPQASKSVSAAYKEGMDSETLIKAALKSML.

This sequence belongs to the RuvA family. Homotetramer. Forms an RuvA(8)-RuvB(12)-Holliday junction (HJ) complex. HJ DNA is sandwiched between 2 RuvA tetramers; dsDNA enters through RuvA and exits via RuvB. An RuvB hexamer assembles on each DNA strand where it exits the tetramer. Each RuvB hexamer is contacted by two RuvA subunits (via domain III) on 2 adjacent RuvB subunits; this complex drives branch migration. In the full resolvosome a probable DNA-RuvA(4)-RuvB(12)-RuvC(2) complex forms which resolves the HJ.

It is found in the cytoplasm. Functionally, the RuvA-RuvB-RuvC complex processes Holliday junction (HJ) DNA during genetic recombination and DNA repair, while the RuvA-RuvB complex plays an important role in the rescue of blocked DNA replication forks via replication fork reversal (RFR). RuvA specifically binds to HJ cruciform DNA, conferring on it an open structure. The RuvB hexamer acts as an ATP-dependent pump, pulling dsDNA into and through the RuvAB complex. HJ branch migration allows RuvC to scan DNA until it finds its consensus sequence, where it cleaves and resolves the cruciform DNA. The sequence is that of Holliday junction branch migration complex subunit RuvA from Shewanella sp. (strain W3-18-1).